The following is a 263-amino-acid chain: HLA class II histocompatibility antigen, DM beta chain (263 aa).

An N-terminal signal peptide occupies residues 1-18 (MITFLPLLLGLSLGCTGA). The interval 19–112 (GGFVAHVEST…PFWGSLTNRT (94 aa)) is beta-1. Topologically, residues 19-218 (GGFVAHVEST…PGLSPMQTLK (200 aa)) are lumenal. 2 disulfide bridges follow: cysteine 29/cysteine 97 and cysteine 43/cysteine 53. An N-linked (GlcNAc...) asparagine glycan is attached at asparagine 110. Residues 113–207 (RPPSVQVAKT…GAPEPILRDW (95 aa)) are beta-2. Residues 114–208 (PPSVQVAKTT…APEPILRDWT (95 aa)) form the Ig-like C1-type domain. Residues cysteine 135 and cysteine 192 are joined by a disulfide bond. The connecting peptide stretch occupies residues 208-218 (TPGLSPMQTLK). The chain crosses the membrane as a helical span at residues 219-239 (VSVSAVTLGLGLIIFSLGVIS). Over 240-263 (WRRAGHSSYTPLPGSNYSEGWHIS) the chain is Cytoplasmic. Positions 248–251 (YTPL) match the YXXZ motif motif.

Belongs to the MHC class II family. In terms of assembly, heterodimer of an alpha chain (DMA) and a beta chain (DMB). Interacts with MHCII; this interaction mediates rapid selection of high-affinity peptides in a pH-dependent manner, with an optimum at pH 5.5.

The protein resides in the late endosome membrane. Its subcellular location is the lysosome membrane. Its function is as follows. Plays a critical role in catalyzing the release of class II-associated invariant chain peptide (CLIP) from newly synthesized MHC class II molecules and freeing the peptide binding site for acquisition of antigenic peptides. In B-cells, the interaction between HLA-DM and MHC class II molecules is regulated by HLA-DO. The protein is HLA class II histocompatibility antigen, DM beta chain (HLA-DMB) of Homo sapiens (Human).